A 782-amino-acid chain; its full sequence is Coiled-coil alpha-helical rod protein 1 (782 aa).

2 stretches are compositionally biased toward basic and acidic residues: residues 62–74 and 208–218; these read ERDV…EPGR and ETRRAGEAKEL. 2 disordered regions span residues 62–82 and 191–218; these read ERDV…WGLE and SSLT…AKEL. Coiled coils occupy residues 82–314, 344–435, and 498–691; these read EGSQ…ELTR, LMVQ…VVNA, and VADV…QQEG.

It is found in the cytoplasm. Its subcellular location is the nucleus. May be a regulator of keratinocyte proliferation or differentiation. This is Coiled-coil alpha-helical rod protein 1 (CCHCR1) from Pongo pygmaeus (Bornean orangutan).